The sequence spans 60 residues: Large ribosomal subunit protein bL32 (60 aa).

The protein belongs to the bacterial ribosomal protein bL32 family.

The polypeptide is Large ribosomal subunit protein bL32 (Streptococcus mutans serotype c (strain ATCC 700610 / UA159)).